Here is a 284-residue protein sequence, read N- to C-terminus: Aquaporin NIP1-1 (284 aa).

The segment covering 1-12 (MAGGDNNSQTTN) has biased composition (polar residues). Positions 1–28 (MAGGDNNSQTTNGGSGHEQRAMEEGRKQ) are disordered. Residues 17–28 (HEQRAMEEGRKQ) are compositionally biased toward basic and acidic residues. The next 2 membrane-spanning stretches (helical) occupy residues 50–70 (IIAEIFGTYFLIFAGCGAVTI) and 78–98 (ITFPGVAIVWGLAVMVMVYAV). Positions 107 to 109 (NPA) match the NPA 1 motif. 3 helical membrane passes run 129–149 (AAAQMLGATLAAGTLRLMFGG), 166–186 (SLVLEFIITFYLMFVISGVAT), and 194–214 (LAGLAVGATILLNVLIAGPIS). The NPA 2 signature appears at 219-221 (NPA). A helical transmembrane segment spans residues 236–256 (IWVYIVGPVAGAVAGAWAYNI).

It belongs to the MIP/aquaporin (TC 1.A.8) family. NIP (TC 1.A.8.12) subfamily. Expressed in leaves and at lower levels in roots and anthers.

The protein localises to the membrane. In terms of biological role, aquaporins facilitate the transport of water and small neutral solutes across cell membranes. The polypeptide is Aquaporin NIP1-1 (NIP1-1) (Oryza sativa subsp. japonica (Rice)).